The sequence spans 252 residues: Large ribosomal subunit protein uL4 (252 aa).

It belongs to the universal ribosomal protein uL4 family. As to quaternary structure, part of the 50S ribosomal subunit.

Functionally, one of the primary rRNA binding proteins, this protein initially binds near the 5'-end of the 23S rRNA. It is important during the early stages of 50S assembly. It makes multiple contacts with different domains of the 23S rRNA in the assembled 50S subunit and ribosome. Its function is as follows. Forms part of the polypeptide exit tunnel. The protein is Large ribosomal subunit protein uL4 of Methanococcus maripaludis (strain C6 / ATCC BAA-1332).